The sequence spans 306 residues: Non-structural protein 3 (306 aa).

The protein is Non-structural protein 3 (Segment-7) of Banna virus (BAV).